Consider the following 100-residue polypeptide: Small ribosomal subunit protein bS6 (100 aa).

This sequence belongs to the bacterial ribosomal protein bS6 family.

Binds together with bS18 to 16S ribosomal RNA. This Enterococcus faecalis (strain ATCC 700802 / V583) protein is Small ribosomal subunit protein bS6.